Here is a 470-residue protein sequence, read N- to C-terminus: Beta-Ala-Xaa dipeptidase (470 aa).

Histidine 87 lines the Zn(2+) pocket. Residue aspartate 89 is part of the active site. Aspartate 119 serves as a coordination point for Zn(2+). Glutamate 153 acts as the Proton acceptor in catalysis. 2 residues coordinate Zn(2+): glutamate 154 and aspartate 177. Arginine 350 is a binding site for substrate. Position 439 (histidine 439) interacts with Zn(2+).

Belongs to the peptidase M20A family. The cofactor is Zn(2+).

Its subcellular location is the cytoplasm. Fully inhibited by 1,10-phenanthroline or EDTA. Is a relatively unspecific dipeptidase cleaving a variety of dipeptides, notably those with an N-terminal beta-Ala or D-Ala residue, e.g. carnosine (beta-Ala-His). To a lesser extent, also shows aminopeptidase activity, since it is able to catalyze the removal of the N-terminal amino acid from a few distinct tripeptides. The polypeptide is Beta-Ala-Xaa dipeptidase (pepV) (Lactobacillus delbrueckii subsp. lactis).